The chain runs to 221 residues: Holliday junction branch migration complex subunit RuvA (221 aa).

Residues 1–61 (MQIYQFGKIV…DYTKITYGFA (61 aa)) are domain I. Residues 62 to 139 (SFRERILFED…RFNENHKNQT (78 aa)) form a domain II region. The segment at 133 to 155 (ENHKNQTEETNQDSQEKELEKKD) is disordered. The segment at 140 to 166 (EETNQDSQEKELEKKDDLADITIQKSN) is flexible linker. Residues 146–155 (SQEKELEKKD) are compositionally biased toward basic and acidic residues. Residues 167-221 (LEDKTAANLEDTLKMLGFKPRQIDYALTKVEPNENFENLIENAIKIISNAREFRN) are domain III.

Belongs to the RuvA family. In terms of assembly, homotetramer. Forms an RuvA(8)-RuvB(12)-Holliday junction (HJ) complex. HJ DNA is sandwiched between 2 RuvA tetramers; dsDNA enters through RuvA and exits via RuvB. An RuvB hexamer assembles on each DNA strand where it exits the tetramer. Each RuvB hexamer is contacted by two RuvA subunits (via domain III) on 2 adjacent RuvB subunits; this complex drives branch migration. In the full resolvosome a probable DNA-RuvA(4)-RuvB(12)-RuvC(2) complex forms which resolves the HJ.

Its subcellular location is the cytoplasm. The RuvA-RuvB-RuvC complex processes Holliday junction (HJ) DNA during genetic recombination and DNA repair, while the RuvA-RuvB complex plays an important role in the rescue of blocked DNA replication forks via replication fork reversal (RFR). RuvA specifically binds to HJ cruciform DNA, conferring on it an open structure. The RuvB hexamer acts as an ATP-dependent pump, pulling dsDNA into and through the RuvAB complex. HJ branch migration allows RuvC to scan DNA until it finds its consensus sequence, where it cleaves and resolves the cruciform DNA. This is Holliday junction branch migration complex subunit RuvA from Mesomycoplasma hyopneumoniae (strain J / ATCC 25934 / NCTC 10110) (Mycoplasma hyopneumoniae).